Here is a 525-residue protein sequence, read N- to C-terminus: GMP synthase [glutamine-hydrolyzing] (525 aa).

The Glutamine amidotransferase type-1 domain maps to 9–207 (RILILDFGSQ…VQDICGCEAL (199 aa)). The Nucleophile role is filled by Cys-86. Active-site residues include His-181 and Glu-183. A GMPS ATP-PPase domain is found at 208 to 400 (WTASNIVEDA…LGLPYDMVYR (193 aa)). 235 to 241 (SGGVDSS) provides a ligand contact to ATP.

In terms of assembly, homodimer.

The catalysed reaction is XMP + L-glutamine + ATP + H2O = GMP + L-glutamate + AMP + diphosphate + 2 H(+). It participates in purine metabolism; GMP biosynthesis; GMP from XMP (L-Gln route): step 1/1. Functionally, catalyzes the synthesis of GMP from XMP. The chain is GMP synthase [glutamine-hydrolyzing] from Pseudomonas putida (strain GB-1).